The primary structure comprises 292 residues: 11-beta-hydroxysteroid dehydrogenase 1 (292 aa).

Residues 1–7 (MAFMKKY) are Cytoplasmic-facing. A helical; Signal-anchor for type II membrane protein transmembrane segment spans residues 8–24 (LLPILGIFLAYYYYSAN). Over 25 to 292 (EEFRPEMLRG…KYNMERFINN (268 aa)) the chain is Lumenal. Residues 41-67 (GASK…TARS) and 92-93 (TM) contribute to the NADP(+) site. Asn-95 is a glycosylation site (N-linked (GlcNAc...) asparagine). 119-121 (NHI) serves as a coordination point for NADP(+). Ser-170 contacts substrate. Tyr-183 acts as the Proton acceptor in catalysis. An NADP(+)-binding site is contributed by 183–187 (YSASK). Residue Asn-207 is glycosylated (N-linked (GlcNAc...) asparagine). NADP(+) is bound by residues 216-222 (GLIDTDT) and 218-222 (IDTDT).

This sequence belongs to the short-chain dehydrogenases/reductases (SDR) family. Homodimer. In terms of tissue distribution, liver, kidney, lung, hypothalamus, anterior pituitary and placenta.

The protein resides in the endoplasmic reticulum membrane. The catalysed reaction is an 11beta-hydroxysteroid + NADP(+) = an 11-oxosteroid + NADPH + H(+). The enzyme catalyses corticosterone + NADP(+) = 11-dehydrocorticosterone + NADPH + H(+). It carries out the reaction cortisone + NADPH + H(+) = cortisol + NADP(+). It catalyses the reaction a 7beta-hydroxysteroid + NADP(+) = a 7-oxosteroid + NADPH + H(+). The catalysed reaction is 7-oxocholesterol + NADPH + H(+) = 7beta-hydroxycholesterol + NADP(+). The enzyme catalyses chenodeoxycholate + NADP(+) = 7-oxolithocholate + NADPH + H(+). It carries out the reaction 7-oxolithocholate + NADPH + H(+) = ursodeoxycholate + NADP(+). It catalyses the reaction glycochenodeoxycholate + NADP(+) = 7-oxoglycolithocholate + NADPH + H(+). The catalysed reaction is taurochenodeoxycholate + NADP(+) = 7-oxotaurolithocholate + NADPH + H(+). The enzyme catalyses tauroursodeoxycholate + NADP(+) = 7-oxotaurolithocholate + NADPH + H(+). It carries out the reaction glycoursodeoxycholate + NADP(+) = 7-oxoglycolithocholate + NADPH + H(+). It catalyses the reaction 7-oxopregnenolone + NADPH + H(+) = 7beta-hydroxypregnenolone + NADP(+). The catalysed reaction is 3beta,7alpha-dihydroxyandrost-5-en-17-one + NADP(+) = 3beta-hydroxy-5-androstene-7,17-dione + NADPH + H(+). The enzyme catalyses 3beta-hydroxy-5-androstene-7,17-dione + NADPH + H(+) = 3beta,7beta-dihydroxyandrost-5-en-17-one + NADP(+). It carries out the reaction 3beta-hydroxy-5alpha-androstane-7,17-dione + NADPH + H(+) = 3beta,7beta-dihydroxy-5alpha-androstan-17-one + NADP(+). Controls the reversible conversion of biologically active glucocorticoids such as cortisone to cortisol, and 11-dehydrocorticosterone to corticosterone in the presence of NADP(H). Participates in the corticosteroid receptor-mediated anti-inflammatory response, as well as metabolic and homeostatic processes. Plays a role in the secretion of aqueous humor in the eye, maintaining a normotensive, intraocular environment. Bidirectional in vitro, predominantly functions as a reductase in vivo, thereby increasing the concentration of active glucocorticoids. It has broad substrate specificity, besides glucocorticoids, it accepts other steroid and sterol substrates. Interconverts 7-oxo- and 7-hydroxy-neurosteroids such as 7-oxopregnenolone and 7beta-hydroxypregnenolone, 7-oxodehydroepiandrosterone (3beta-hydroxy-5-androstene-7,17-dione) and 7beta-hydroxydehydroepiandrosterone (3beta,7beta-dihydroxyandrost-5-en-17-one), among others. Catalyzes the stereo-specific conversion of the major dietary oxysterol, 7-ketocholesterol (7-oxocholesterol), into the more polar 7-beta-hydroxycholesterol metabolite. 7-oxocholesterol is one of the most important oxysterols, it participates in several events such as induction of apoptosis, accumulation in atherosclerotic lesions, lipid peroxidation, and induction of foam cell formation. Mediates the 7-oxo reduction of 7-oxolithocholate mainly to chenodeoxycholate, and to a lesser extent to ursodeoxycholate, both in its free form and when conjugated to glycine or taurine, providing a link between glucocorticoid activation and bile acid metabolism. Catalyzes the synthesis of 7-beta-25-dihydroxycholesterol from 7-oxo-25-hydroxycholesterol in vitro, which acts as a ligand for the G-protein-coupled receptor (GPCR) Epstein-Barr virus-induced gene 2 (EBI2) and may thereby regulate immune cell migration. This is 11-beta-hydroxysteroid dehydrogenase 1 (HSD11B1) from Ovis aries (Sheep).